We begin with the raw amino-acid sequence, 498 residues long: Probable malate:quinone oxidoreductase (498 aa).

This sequence belongs to the MQO family. FAD is required as a cofactor.

The catalysed reaction is (S)-malate + a quinone = a quinol + oxaloacetate. Its pathway is carbohydrate metabolism; tricarboxylic acid cycle; oxaloacetate from (S)-malate (quinone route): step 1/1. In Prochlorococcus marinus (strain MIT 9312), this protein is Probable malate:quinone oxidoreductase.